The chain runs to 536 residues: Pre-mRNA 3'-end-processing factor FIP1 (536 aa).

Basic and acidic residues-rich tracts occupy residues 1-10 (MSAGEVERLV) and 32-42 (VHVHSDLAKDL). Disordered stretches follow at residues 1–95 (MSAG…EDDV), 212–246 (VQQGRTGNSEKEAALPSTKAEFTSPPSLFKTGLPP), and 300–536 (FPPG…APAE). The interval 1 to 110 (MSAGEVERLV…DIKTGAPQYG (110 aa)) is sufficient for interaction with PAPOLA. Positions 1 to 296 (MSAGEVERLV…TEVDNNFSKP (296 aa)) are necessary for stimulating PAPOLA activity. Acidic residues-rich tracts occupy residues 43–54 (DENEVERPEEEN) and 80–94 (TEDDSDSDSDDDEDD). Phosphoserine occurs at positions 84, 86, and 88. Positions 136-219 (KGVDLDAPGS…ITVQQGRTGN (84 aa)) are sufficient for interaction with CPSF4. Residues 300 to 344 (FPPGAPPTHLPPPPFLPPPPTVSTAPPLIPPPGFPPPPGAPPPSL) show a composition bias toward pro residues. Y366 carries the post-translational modification Phosphotyrosine. The span at 374–390 (LTSSAPSWPSLVDTTKQ) shows a compositional bias: polar residues. The tract at residues 383-536 (SLVDTTKQWD…QESTEAAPAE (154 aa)) is sufficient for interaction with CPSF1 and CSTF3. Residues 394 to 434 (YARREKDRDRDRERDRDRERERDRDRERERTRERERERDHS) show a composition bias toward basic and acidic residues. The tract at residues 397 to 432 (REKDRDRDRERDRDRERERDRDRERERTRERERERD) is arg/Asp/Glu-rich domain. S434 is modified (phosphoserine). Residue T436 is modified to Phosphothreonine. Phosphoserine is present on residues S438 and S442. Residues 443–470 (DEERYRYREYAERGYERHRASREKEERH) show a composition bias toward basic and acidic residues. Over residues 484-493 (KSSRSNSRRR) the composition is skewed to basic residues. Residue S496 is modified to Phosphoserine. Residues 502 to 512 (HRRHKHKKSKR) are compositionally biased toward basic residues.

It belongs to the FIP1 family. Component of the cleavage and polyadenylation specificity factor (CPSF) complex, composed of CPSF1, CPSF2, CPSF3, CPSF4 and FIP1L1. Found in a complex with CPSF1, FIP1L1 and PAPOLA. Interacts with CPSF1, CPSF4, CSTF2 and CSTF3. Interacts with AHCYL1 (when phosphorylated); the interaction is direct and associates AHCYL1 with the CPSF complex and RNA. Interacts with PAPOLA; the interaction seems to be increased by the interaction with AHCYL1. Interacts with NUDT21/CPSF5; this interaction occurs in a RNA sequence-specific manner. Interacts (preferentially via unphosphorylated form and Arg/Glu/Asp-rich domain) with CPSF6 (via Arg/Ser-rich domain); this interaction mediates, at least in part, the interaction between the CFIm and CPSF complexes and may be inhibited by CPSF6 hyper-phosphorylation. Interacts (preferentially via unphosphorylated form and Arg/Asp/Glu-rich domain) with CPSF7 (via Arg/Ser-rich domain); this interaction mediates, at least in part, the interaction between the CFIm and CPSF complexes and may be inhibited by CPSF7 hyper-phosphorylation.

The protein localises to the nucleus. In terms of biological role, component of the cleavage and polyadenylation specificity factor (CPSF) complex that plays a key role in pre-mRNA 3'-end formation, recognizing the AAUAAA signal sequence and interacting with poly(A) polymerase and other factors to bring about cleavage and poly(A) addition. FIP1L1 contributes to poly(A) site recognition and stimulates poly(A) addition. Binds to U-rich RNA sequence elements surrounding the poly(A) site. May act to tether poly(A) polymerase to the CPSF complex. This is Pre-mRNA 3'-end-processing factor FIP1 (Fip1l1) from Rattus norvegicus (Rat).